Reading from the N-terminus, the 125-residue chain is Neuraminyllactose-binding hemagglutinin (125 aa).

Positions 92–97 (KRTIQK) are N-acetyl-neuraminyl-alpha(2,3)-lactose binding motif.

The protein localises to the cell outer membrane. This Helicobacter pylori (Campylobacter pylori) protein is Neuraminyllactose-binding hemagglutinin (hpaA).